A 1077-amino-acid polypeptide reads, in one-letter code: Carbamoyl phosphate synthase large chain (1077 aa).

Residues 1–403 (MPKRTDIQSI…SLHKALRGLE (403 aa)) form a carboxyphosphate synthetic domain region. ATP-binding residues include R129, R169, G175, G176, E208, L210, E215, G241, I242, H243, Q285, and E299. In terms of domain architecture, ATP-grasp 1 spans 133–328 (DKAMKSIGLE…IAKIAAKLAV (196 aa)). Positions 285, 299, and 301 each coordinate Mg(2+). Mn(2+)-binding residues include Q285, E299, and N301. Residues 404–553 (VGATGFDEMV…YSSYDDECEA (150 aa)) form an oligomerization domain region. Positions 554–935 (NPTDKEKIMV…AYAKAELGCG (382 aa)) are carbamoyl phosphate synthetic domain. An ATP-grasp 2 domain is found at 678 to 869 (QQAVDRLGLL…LAKIAARVMA (192 aa)). R714, R753, L755, E760, G785, V786, H787, S788, Q828, and E840 together coordinate ATP. Mg(2+) contacts are provided by Q828, E840, and N842. Positions 828, 840, and 842 each coordinate Mn(2+). The MGS-like domain occupies 936 to 1077 (NVYPEGGRAL…HAQVQASLKA (142 aa)). Residues 936-1077 (NVYPEGGRAL…HAQVQASLKA (142 aa)) are allosteric domain.

Belongs to the CarB family. Composed of two chains; the small (or glutamine) chain promotes the hydrolysis of glutamine to ammonia, which is used by the large (or ammonia) chain to synthesize carbamoyl phosphate. Tetramer of heterodimers (alpha,beta)4. Requires Mg(2+) as cofactor. Mn(2+) serves as cofactor.

It carries out the reaction hydrogencarbonate + L-glutamine + 2 ATP + H2O = carbamoyl phosphate + L-glutamate + 2 ADP + phosphate + 2 H(+). The catalysed reaction is hydrogencarbonate + NH4(+) + 2 ATP = carbamoyl phosphate + 2 ADP + phosphate + 2 H(+). Its pathway is amino-acid biosynthesis; L-arginine biosynthesis; carbamoyl phosphate from bicarbonate: step 1/1. The protein operates within pyrimidine metabolism; UMP biosynthesis via de novo pathway; (S)-dihydroorotate from bicarbonate: step 1/3. Its function is as follows. Large subunit of the glutamine-dependent carbamoyl phosphate synthetase (CPSase). CPSase catalyzes the formation of carbamoyl phosphate from the ammonia moiety of glutamine, carbonate, and phosphate donated by ATP, constituting the first step of 2 biosynthetic pathways, one leading to arginine and/or urea and the other to pyrimidine nucleotides. The large subunit (synthetase) binds the substrates ammonia (free or transferred from glutamine from the small subunit), hydrogencarbonate and ATP and carries out an ATP-coupled ligase reaction, activating hydrogencarbonate by forming carboxy phosphate which reacts with ammonia to form carbamoyl phosphate. The polypeptide is Carbamoyl phosphate synthase large chain (Vibrio vulnificus (strain CMCP6)).